The following is a 469-amino-acid chain: Reticulon-2 (469 aa).

Disordered regions lie at residues 1–180 and 201–238; these read MGQV…EASE and LTPQLSPSSGIPQAHTPSPQRSQDLNTGPDEPLPNGEG. Positions 14–25 are enriched in low complexity; it reads APSTASSTPDST. The span at 32 to 43 shows a compositional bias: basic and acidic residues; it reads SDFRELHTAREF. A Phosphoserine modification is found at S44. The span at 135–144 shows a compositional bias: basic and acidic residues; it reads RPLEELRLRL. Polar residues-rich tracts occupy residues 159 to 168 and 203 to 226; these read DSATSSSTPL and PQLSPSSGIPQAHTPSPQRSQDLN. The 200-residue stretch at 270–469 folds into the Reticulon domain; that stretch reads VADLLYWKDT…SVSGSKAKAE (200 aa). Transmembrane regions (helical) follow at residues 293 to 313 and 388 to 408; these read LLCLLHFSIVSVAAHLALLGL and LLFYILTFVGAIFNGLTLVIL.

As to quaternary structure, interacts with SPAST. Interacts with BACE1. Interacts (via first transmembrane domain) with ARL6IP5/GTRAP3-18. Interacts (via N-terminus) with SLC1A1/EAAC1; the interaction promotes cell surface expression of SLC1A1. In terms of tissue distribution, expressed in brain and spinal cord (at protein level). In the embryonic brain cortex, expressed in neurons but not in astrocytes (at protein level).

It localises to the endoplasmic reticulum membrane. The protein resides in the sarcoplasmic reticulum membrane. It is found in the cell membrane. Its subcellular location is the sarcolemma. The protein localises to the T-tubule. It localises to the cytoplasm. The protein resides in the myofibril. It is found in the sarcomere. Its subcellular location is the z line. The protein localises to the cytoskeleton. Functionally, inhibits amyloid precursor protein processing, probably by blocking BACE1 activity. Enhances trafficking of the glutamate transporter SLC1A1/EAAC1 from the endoplasmic reticulum to the cell surface. Plays a role in the translocation of SLC2A4/GLUT4 from intracellular membranes to the cell membrane which facilitates the uptake of glucose into the cell. The chain is Reticulon-2 from Rattus norvegicus (Rat).